Reading from the N-terminus, the 95-residue chain is NADH-quinone oxidoreductase subunit K (95 aa).

A run of 3 helical transmembrane segments spans residues 1-21, 25-45, and 59-79; these read MSYL…VLTR, ILVF…LVGF, and MVIA…VAIF.

This sequence belongs to the complex I subunit 4L family. In terms of assembly, NDH-1 is composed of 15 different subunits. Subunits NuoA, H, J, K, L, M, N constitute the membrane sector of the complex.

The protein resides in the cell inner membrane. The catalysed reaction is a quinone + NADH + 5 H(+)(in) = a quinol + NAD(+) + 4 H(+)(out). NDH-1 shuttles electrons from NADH, via FMN and iron-sulfur (Fe-S) centers, to quinones in the respiratory chain. The immediate electron acceptor for the enzyme in this species is believed to be a menaquinone. Couples the redox reaction to proton translocation (for every two electrons transferred, four hydrogen ions are translocated across the cytoplasmic membrane), and thus conserves the redox energy in a proton gradient. In Thermus thermophilus (strain ATCC BAA-163 / DSM 7039 / HB27), this protein is NADH-quinone oxidoreductase subunit K.